A 391-amino-acid polypeptide reads, in one-letter code: Polyketide synthase 5 (391 aa).

Residue Cys164 is part of the active site.

The protein belongs to the thiolase-like superfamily. Chalcone/stilbene synthases family. Homodimer. Expressed in fruits.

It carries out the reaction (E)-4-coumaroyl-CoA + 3 malonyl-CoA + 3 H(+) = 2',4,4',6'-tetrahydroxychalcone + 3 CO2 + 4 CoA. The protein operates within secondary metabolite biosynthesis; flavonoid biosynthesis. Its function is as follows. Polyketide synthase producing naringenin chalcone. Can use p-coumaryl-CoA as substrate. The chain is Polyketide synthase 5 (PKS5) from Rubus idaeus (Raspberry).